Here is a 362-residue protein sequence, read N- to C-terminus: Probable cysteine protease RDL2 (362 aa).

The signal sequence occupies residues 1 to 28 (MAATPIRVIVSALVILSVLLLSSSLGVA). A propeptide spans 29–129 (TETEIERNET…ERYLYKEGDV (101 aa)) (activation peptide). Residue Asn-36 is glycosylated (N-linked (GlcNAc...) asparagine). 2 disulfide bridges follow: Cys-151/Cys-194 and Cys-185/Cys-228. Residue Cys-154 is part of the active site. Residue Asn-234 is glycosylated (N-linked (GlcNAc...) asparagine). An intrachain disulfide couples Cys-287 to Cys-338. Active-site residues include His-293 and Asn-313.

The protein belongs to the peptidase C1 family.

Probable thiol protease. The sequence is that of Probable cysteine protease RDL2 from Arabidopsis thaliana (Mouse-ear cress).